Consider the following 510-residue polypeptide: ATP synthase subunit alpha (510 aa).

169 to 176 contacts ATP; it reads GDRQTGKT.

The protein belongs to the ATPase alpha/beta chains family. In terms of assembly, F-type ATPases have 2 components, CF(1) - the catalytic core - and CF(0) - the membrane proton channel. CF(1) has five subunits: alpha(3), beta(3), gamma(1), delta(1), epsilon(1). CF(0) has four main subunits: a(1), b(1), b'(1) and c(9-12).

Its subcellular location is the cell inner membrane. The catalysed reaction is ATP + H2O + 4 H(+)(in) = ADP + phosphate + 5 H(+)(out). In terms of biological role, produces ATP from ADP in the presence of a proton gradient across the membrane. The alpha chain is a regulatory subunit. This Rhodospirillum rubrum (strain ATCC 11170 / ATH 1.1.1 / DSM 467 / LMG 4362 / NCIMB 8255 / S1) protein is ATP synthase subunit alpha.